The chain runs to 154 residues: Cyclin-dependent protein kinase inhibitor SMR14 (154 aa).

The segment at 1 to 111 is disordered; it reads MSKIKIFHLF…RPPRKPKAIP (111 aa). The span at 24-37 shows a compositional bias: low complexity; it reads SLLVPSKSDSLDSS. Residues 74–83 show a composition bias toward basic and acidic residues; the sequence is KWECKDEESP.

In terms of biological role, probable cyclin-dependent protein kinase (CDK) inhibitor that functions as a repressor of mitosis in the endoreduplication cell cycle. The chain is Cyclin-dependent protein kinase inhibitor SMR14 from Arabidopsis thaliana (Mouse-ear cress).